A 456-amino-acid polypeptide reads, in one-letter code: Glycosyl hydrolase family 109 protein 2 (456 aa).

Residues 1–33 (MSGFDRRSFLKASMVTAAATALAACASSERATG) constitute a signal peptide (tat-type signal). NAD(+) is bound by residues 63-64 (ER), D85, 134-137 (WAWH), 154-155 (EV), and N183. Substrate-binding positions include Y212, R231, 243 to 246 (YPTH), and Y325. Residue Y243 coordinates NAD(+).

It belongs to the Gfo/Idh/MocA family. Glycosyl hydrolase 109 subfamily. Requires NAD(+) as cofactor. Predicted to be exported by the Tat system. The position of the signal peptide cleavage has not been experimentally proven.

Its function is as follows. Glycosidase. This Shewanella sp. (strain MR-4) protein is Glycosyl hydrolase family 109 protein 2.